A 130-amino-acid polypeptide reads, in one-letter code: uncharacterized protein (130 aa).

Residues 23-130 (SHLRLLPTAN…GAHQLSSPSS (108 aa)) form a disordered region. A compositionally biased stretch (polar residues) spans 30–45 (TANSPSGSNQPTNPNR).

This is an uncharacterized protein from Homo sapiens (Human).